The following is a 1388-amino-acid chain: Endoribonuclease Dicer homolog 2 (1388 aa).

Residues 31–210 (ALEKAIKQNT…DSYWKKIHEL (180 aa)) form the Helicase ATP-binding domain. 44–51 (LETGSGKT) is a binding site for ATP. Residues 152–155 (DECH) carry the DECH box motif. The region spanning 380 to 544 (LGYSSLENIR…PLPDDSDEPL (165 aa)) is the Helicase C-terminal domain. Positions 559–645 (SVSLIYHYCS…VPDMVVAETV (87 aa)) constitute a Dicer dsRNA-binding fold domain. Residues 805-935 (TSHEVLEKHE…LPPELCHVIL (131 aa)) enclose the PAZ domain. RNase III domains are found at residues 962–1113 (AYNL…SEGG) and 1149–1296 (VGYM…VDSG). The Mg(2+) site is built by Glu-1188, Asp-1282, and Glu-1285. In terms of domain architecture, DRBM spans 1315–1384 (TPETVKLHPV…YKEVLNLLKN (70 aa)).

This sequence belongs to the helicase family. Dicer subfamily. It depends on Mg(2+) as a cofactor. Requires Mn(2+) as cofactor.

It localises to the nucleus. It is found in the cytoplasm. Ribonuclease (RNase) III involved in RNA-mediated post-transcriptional gene silencing (PTGS). Involved in the processing of natural small interfering RNAs (nat-siRNAs, derived from cis-natural antisense transcripts) by cleaving small dsRNAs into 24 nucleotide nat-siRNAs. Plays an essential role in transitive silencing of transgenes by processing secondary siRNAs. This pathway, which requires DCL4 and RDR6, amplifies silencing by using the target RNA as substrate to generate secondary siRNAs, providing an efficient mechanism for long-distance silencing. May participate with DCL3 in the production of 24 nucleotide repeat-associated siRNAs (ra-siRNAs) which derive from heterochromatin and DNA repeats such as transposons. Plays a role in antiviral RNA silencing. Involved in the production of viral siRNAs derived from the turnip crinkle virus (TCV) and tobacco rattle virus (TRV). Targeted by the viral silencing suppressor (VSR) protein 2b of the cucumber mosaic virus (CMV) that inactivates DCL2 function in RNA silencing. Does not seem to be involved in microRNAs (miRNAs) processing. This chain is Endoribonuclease Dicer homolog 2, found in Arabidopsis thaliana (Mouse-ear cress).